The primary structure comprises 449 residues: Glucose-6-phosphate isomerase (449 aa).

Glutamate 291 (proton donor) is an active-site residue. Active-site residues include histidine 312 and lysine 426.

The protein belongs to the GPI family.

Its subcellular location is the cytoplasm. It catalyses the reaction alpha-D-glucose 6-phosphate = beta-D-fructose 6-phosphate. It functions in the pathway carbohydrate biosynthesis; gluconeogenesis. The protein operates within carbohydrate degradation; glycolysis; D-glyceraldehyde 3-phosphate and glycerone phosphate from D-glucose: step 2/4. In terms of biological role, catalyzes the reversible isomerization of glucose-6-phosphate to fructose-6-phosphate. In Streptococcus pyogenes serotype M4 (strain MGAS10750), this protein is Glucose-6-phosphate isomerase.